A 493-amino-acid polypeptide reads, in one-letter code: Malonyl-CoA decarboxylase, mitochondrial (493 aa).

Residues 1 to 39 (MRGFGPGLTARRLLPLRLPPRPPGPRLASGQAAGALERA) constitute a mitochondrion transit peptide. The segment at 40-190 (MDELLRRAVP…VLKGMLSEWF (151 aa)) is alpha-helical domain. The residue at position 59 (Lys-59) is an N6-acetyllysine. Lys-168 is modified (N6-acetyllysine; alternate). Lys-168 carries the N6-succinyllysine; alternate modification. Positions 191-493 (SSGFLNLERV…VAQFQKNSKL (303 aa)) are catalytic domain. Residue Lys-211 is modified to N6-acetyllysine. An N6-succinyllysine modification is found at Lys-222. Residues 299–305 (QGVELGT) and Ser-329 each bind malonyl-CoA. Catalysis depends on Ser-329, which acts as the Proton acceptor. The residue at position 389 (Lys-389) is an N6-acetyllysine. A malonyl-CoA-binding site is contributed by His-423. The active-site Proton donor is His-423. Lys-472 bears the N6-acetyllysine mark. Positions 491-493 (SKL) match the Microbody targeting signal motif.

In terms of assembly, homotetramer. Dimer of dimers. The two subunits within a dimer display conformational differences suggesting that at any given moment, only one of the two subunits is competent for malonyl-CoA binding and catalytic activity. Under oxidizing conditions, can form disulfide-linked homotetramers (in vitro). Associates with the peroxisomal targeting signal receptor PEX5. Post-translationally, acetylation at Lys-472 activates malonyl-CoA decarboxylase activity. Deacetylation at Lys-472 by SIRT4 represses activity, leading to promote lipogenesis. Interchain disulfide bonds may form in peroxisomes (Potential). Interchain disulfide bonds are not expected to form in the reducing environment of the cytoplasm and mitochondria. As to expression, expressed in fibroblasts and hepatoblastoma cells (at protein level). Expressed strongly in heart, liver, skeletal muscle, kidney and pancreas. Expressed in myotubes. Expressed weakly in brain, placenta, spleen, thymus, testis, ovary and small intestine.

Its subcellular location is the cytoplasm. The protein localises to the mitochondrion matrix. It is found in the peroxisome. It localises to the peroxisome matrix. It carries out the reaction malonyl-CoA + H(+) = acetyl-CoA + CO2. The protein operates within metabolic intermediate biosynthesis; acetyl-CoA biosynthesis; acetyl-CoA from malonyl-CoA: step 1/1. With respect to regulation, malonyl-CoA decarboxylase activity does not require any cofactors or divalent metal ions. Formation of interchain disulfide bonds leads to positive cooperativity between active sites and increases the affinity for malonyl-CoA and the catalytic efficiency (in vitro). Catalyzes the conversion of malonyl-CoA to acetyl-CoA. In the fatty acid biosynthesis MCD selectively removes malonyl-CoA and thus assures that methyl-malonyl-CoA is the only chain elongating substrate for fatty acid synthase and that fatty acids with multiple methyl side chains are produced. In peroxisomes it may be involved in degrading intraperoxisomal malonyl-CoA, which is generated by the peroxisomal beta-oxidation of odd chain-length dicarboxylic fatty acids. Plays a role in the metabolic balance between glucose and lipid oxidation in muscle independent of alterations in insulin signaling. May play a role in controlling the extent of ischemic injury by promoting glucose oxidation. The chain is Malonyl-CoA decarboxylase, mitochondrial from Homo sapiens (Human).